We begin with the raw amino-acid sequence, 232 residues long: 7-cyano-7-deazaguanine synthase (232 aa).

8-18 (FSGGQDSTTCL) is an ATP binding site. Residues Cys189, Cys198, Cys201, and Cys204 each contribute to the Zn(2+) site.

It belongs to the QueC family. It depends on Zn(2+) as a cofactor.

The enzyme catalyses 7-carboxy-7-deazaguanine + NH4(+) + ATP = 7-cyano-7-deazaguanine + ADP + phosphate + H2O + H(+). It functions in the pathway purine metabolism; 7-cyano-7-deazaguanine biosynthesis. Its function is as follows. Catalyzes the ATP-dependent conversion of 7-carboxy-7-deazaguanine (CDG) to 7-cyano-7-deazaguanine (preQ(0)). This is 7-cyano-7-deazaguanine synthase from Proteus mirabilis (strain HI4320).